The chain runs to 254 residues: MRILVANDDGYLAPGLAALVEACRGLGELDVVAPEQNSSGTSNALTLQRPLSVWTAANGYRYLNGTPSDCVHVALTGLLPQRPDLVVSGINNGANMGDDTLYSGTVAAAMEGYLFGIPSIAFSLSEKGWTHLDTAARVARRLIEQVIALPPVPGAWLLNVNIPDRPYEDLRGLRTTRLGRRHASEPVIRQSNPRGEPIYWIGAAGDAREAGAGTDFHAVAQGHVSVTPLQVDLTDHTCLPAWGSWLERAGEGGR.

4 residues coordinate a divalent metal cation: aspartate 8, aspartate 9, serine 39, and asparagine 91.

It belongs to the SurE nucleotidase family. It depends on a divalent metal cation as a cofactor.

It is found in the cytoplasm. It catalyses the reaction a ribonucleoside 5'-phosphate + H2O = a ribonucleoside + phosphate. In terms of biological role, nucleotidase that shows phosphatase activity on nucleoside 5'-monophosphates. This is 5'-nucleotidase SurE from Methylibium petroleiphilum (strain ATCC BAA-1232 / LMG 22953 / PM1).